The following is a 111-amino-acid chain: UPF0060 membrane protein XCC2880 (111 aa).

4 helical membrane-spanning segments follow: residues 8-28, 34-54, 62-82, and 91-111; these read LLLF…PYLW, SVWL…LLTL, VYAA…WWVD, and LLGA…PRSG.

This sequence belongs to the UPF0060 family.

It is found in the cell inner membrane. This chain is UPF0060 membrane protein XCC2880, found in Xanthomonas campestris pv. campestris (strain ATCC 33913 / DSM 3586 / NCPPB 528 / LMG 568 / P 25).